Here is a 280-residue protein sequence, read N- to C-terminus: Fe-S cluster assembly protein DRE2 (280 aa).

The segment at 1–121 (MSNLLVFDNS…TTLLKKSGGG (121 aa)) is N-terminal SAM-like domain. Residues 122 to 176 (PKKFAFKRASPATAAPSTNGTNPAATVNLNSVVTLSMDDDDLMDEDDLMEDDTNL) form a linker region. Cys186, Cys198, Cys201, and Cys203 together coordinate [2Fe-2S] cluster. The segment at 186-203 (CDPGPGKKRRKACKDCTC) is fe-S binding site A. [4Fe-4S] cluster contacts are provided by Cys244, Cys247, Cys255, and Cys258. 2 short sequence motifs (cx2C motif) span residues 244-247 (CGSC) and 255-258 (CDGC). The fe-S binding site B stretch occupies residues 244-258 (CGSCALGDAFRCDGC).

This sequence belongs to the anamorsin family. Monomer. Interacts with TAH18. Interacts with MIA40. [2Fe-2S] cluster serves as cofactor. It depends on [4Fe-4S] cluster as a cofactor.

It localises to the cytoplasm. The protein resides in the mitochondrion intermembrane space. Its function is as follows. Component of the cytosolic iron-sulfur (Fe-S) protein assembly (CIA) machinery required for the maturation of extramitochondrial Fe-S proteins. Part of an electron transfer chain functioning in an early step of cytosolic Fe-S biogenesis, facilitating the de novo assembly of a [4Fe-4S] cluster on the scaffold complex CFD1-NBP35. Electrons are transferred to DRE2 from NADPH via the FAD- and FMN-containing protein TAH18. TAH18-DRE2 are also required for the assembly of the diferric tyrosyl radical cofactor of ribonucleotide reductase (RNR), probably by providing electrons for reduction during radical cofactor maturation in the catalytic small subunit RNR2. In Yarrowia lipolytica (strain CLIB 122 / E 150) (Yeast), this protein is Fe-S cluster assembly protein DRE2.